Consider the following 379-residue polypeptide: Succinyl-diaminopimelate desuccinylase (379 aa).

Histidine 68 is a binding site for Zn(2+). Aspartate 70 is an active-site residue. Aspartate 101 is a binding site for Zn(2+). Catalysis depends on glutamate 135, which acts as the Proton acceptor. Zn(2+)-binding residues include glutamate 136, glutamate 164, and histidine 350.

Belongs to the peptidase M20A family. DapE subfamily. As to quaternary structure, homodimer. Zn(2+) serves as cofactor. It depends on Co(2+) as a cofactor.

The catalysed reaction is N-succinyl-(2S,6S)-2,6-diaminopimelate + H2O = (2S,6S)-2,6-diaminopimelate + succinate. It participates in amino-acid biosynthesis; L-lysine biosynthesis via DAP pathway; LL-2,6-diaminopimelate from (S)-tetrahydrodipicolinate (succinylase route): step 3/3. Catalyzes the hydrolysis of N-succinyl-L,L-diaminopimelic acid (SDAP), forming succinate and LL-2,6-diaminopimelate (DAP), an intermediate involved in the bacterial biosynthesis of lysine and meso-diaminopimelic acid, an essential component of bacterial cell walls. This is Succinyl-diaminopimelate desuccinylase from Bordetella bronchiseptica (strain ATCC BAA-588 / NCTC 13252 / RB50) (Alcaligenes bronchisepticus).